A 249-amino-acid polypeptide reads, in one-letter code: 5'-nucleotidase SurE (249 aa).

4 residues coordinate a divalent metal cation: D8, D9, S39, and N91.

The protein belongs to the SurE nucleotidase family. It depends on a divalent metal cation as a cofactor.

The protein localises to the cytoplasm. The catalysed reaction is a ribonucleoside 5'-phosphate + H2O = a ribonucleoside + phosphate. In terms of biological role, nucleotidase that shows phosphatase activity on nucleoside 5'-monophosphates. The protein is 5'-nucleotidase SurE of Ectopseudomonas mendocina (strain ymp) (Pseudomonas mendocina).